The chain runs to 140 residues: MPTINQLVRKGREKKVVKSKSPALNKGYNSFKKEQTNVSSPQKRGVCTRVGTMTPKKPNSALRKYARVRLTNGIEVTAYIPGIGHNLQEHSVVLIRGGRVKDLPGVRYHIIRGALDAAGVANRMQGRSKYGAKKPKAAKK.

A disordered region spans residues 33–55 (KEQTNVSSPQKRGVCTRVGTMTP).

This sequence belongs to the universal ribosomal protein uS12 family. As to quaternary structure, part of the 30S ribosomal subunit. Contacts proteins S8 and S17. May interact with IF1 in the 30S initiation complex.

In terms of biological role, with S4 and S5 plays an important role in translational accuracy. Interacts with and stabilizes bases of the 16S rRNA that are involved in tRNA selection in the A site and with the mRNA backbone. Located at the interface of the 30S and 50S subunits, it traverses the body of the 30S subunit contacting proteins on the other side and probably holding the rRNA structure together. The combined cluster of proteins S8, S12 and S17 appears to hold together the shoulder and platform of the 30S subunit. In Geobacillus kaustophilus (strain HTA426), this protein is Small ribosomal subunit protein uS12.